The chain runs to 438 residues: Trigger factor (438 aa).

The region spanning 160–231 (SDQVTIEEQG…IMDVKTKQLQ (72 aa)) is the PPIase FKBP-type domain. The segment at 407-438 (AQLSGPQAETVAADQGEQQAEGQEESAEKSEE) is disordered. The segment covering 418-427 (AADQGEQQAE) has biased composition (low complexity).

This sequence belongs to the FKBP-type PPIase family. Tig subfamily.

It localises to the cytoplasm. It catalyses the reaction [protein]-peptidylproline (omega=180) = [protein]-peptidylproline (omega=0). Its function is as follows. Involved in protein export. Acts as a chaperone by maintaining the newly synthesized protein in an open conformation. Functions as a peptidyl-prolyl cis-trans isomerase. This Deinococcus deserti (strain DSM 17065 / CIP 109153 / LMG 22923 / VCD115) protein is Trigger factor.